The chain runs to 377 residues: Short chain dehydrogenase gsfE (377 aa).

NADP(+) is bound by residues aspartate 89, glutamine 121, tyrosine 226, alanine 266, and serine 268. The Proton donor role is filled by tyrosine 226.

This sequence belongs to the short-chain dehydrogenases/reductases (SDR) family. Highly divergent.

It carries out the reaction dehydrogriseofulvin + NADPH + H(+) = griseofulvin + NADP(+). It participates in secondary metabolite biosynthesis; terpenoid biosynthesis. Its function is as follows. Short chain dehydrogenase; part of the gene cluster that mediates the biosynthesis of griseofulvin, an important antifungal drug that has been in use for a long time for treating dermatophyte infections. The first step of the pathway is the formation of the heptaketide backbone by gsfA which is initiated by priming with acetyl-CoA, followed by sequential condensations of 6 malonyl-CoA units. The resulting benzophenone can undergo a spontaneous dehydration to form norlichexanthone. However, the true precursor for the griseofulvin biosynthesis is not norlichexanthone, but the heptaketide benzophenone that is O-methylated at 3-OH by gsfB to produce griseophenone D which is further methylated at 9-OH by gsfC to yield griseophenone C. Griseophenone C is then substrate of halogenase gsfI which is responsible for the regio-specific chlorination at the C13 position to form griseophenone B. The cytochrome P450 gsfF catalyzes the coupling of orcinol and phloroglucinol rings in griseophenone B to form desmethyl-dehydrogriseofulvin A which is further methylated at 5-OH by gsfD to yield dehydrogriseofulvin. Finally, gsfE performs stereospecific reduction of enone 18 of dehydrogriseofulvin to afford the final product griseofulvin. The polypeptide is Short chain dehydrogenase gsfE (Penicillium aethiopicum).